The sequence spans 296 residues: Cytidine deaminase (296 aa).

CMP/dCMP-type deaminase domains lie at 47–167 and 186–296; these read DSHE…FGPA and ESDD…VDPV. A substrate-binding site is contributed by 88 to 90; it reads NLE. H101 is a Zn(2+) binding site. E103 functions as the Proton donor in the catalytic mechanism. Residues C128 and C131 each coordinate Zn(2+).

It belongs to the cytidine and deoxycytidylate deaminase family. Homodimer. The cofactor is Zn(2+).

It carries out the reaction cytidine + H2O + H(+) = uridine + NH4(+). The enzyme catalyses 2'-deoxycytidine + H2O + H(+) = 2'-deoxyuridine + NH4(+). Functionally, this enzyme scavenges exogenous and endogenous cytidine and 2'-deoxycytidine for UMP synthesis. The chain is Cytidine deaminase from Shewanella amazonensis (strain ATCC BAA-1098 / SB2B).